The primary structure comprises 577 residues: Laccase-17 (577 aa).

The signal sequence occupies residues Met-1–Gly-22. Plastocyanin-like domains are found at residues Glu-30–Gly-146 and Lys-156–Pro-309. N-linked (GlcNAc...) asparagine glycosylation is found at Asn-35 and Asn-76. Cu cation is bound by residues His-80 and His-82. Asn-112 carries N-linked (GlcNAc...) asparagine glycosylation. Residues His-125 and His-127 each contribute to the Cu cation site. Residues Asn-185, Asn-201, Asn-237, Asn-297, Asn-335, Asn-383, Asn-391, Asn-401, Asn-437, Asn-444, Asn-450, and Asn-460 are each glycosylated (N-linked (GlcNAc...) asparagine). Residues Lys-427 to Asp-561 enclose the Plastocyanin-like 3 domain. Positions 478, 481, 483, 540, 541, 542, and 546 each coordinate Cu cation.

It belongs to the multicopper oxidase family. Cu cation serves as cofactor. As to expression, ubiquitous with higher levels in the inflorescence stem.

Its subcellular location is the secreted. It localises to the extracellular space. The protein resides in the apoplast. It catalyses the reaction 4 hydroquinone + O2 = 4 benzosemiquinone + 2 H2O. Its function is as follows. Lignin degradation and detoxification of lignin-derived products. This chain is Laccase-17 (LAC17), found in Arabidopsis thaliana (Mouse-ear cress).